The following is a 324-amino-acid chain: Glutaminase 2 (324 aa).

Substrate-binding residues include S75, N127, E171, N178, Y202, Y254, and V272.

The protein belongs to the glutaminase family. In terms of assembly, homotetramer.

The enzyme catalyses L-glutamine + H2O = L-glutamate + NH4(+). This Halalkalibacterium halodurans (strain ATCC BAA-125 / DSM 18197 / FERM 7344 / JCM 9153 / C-125) (Bacillus halodurans) protein is Glutaminase 2.